Here is a 99-residue protein sequence, read N- to C-terminus: Transcription factor 1 (99 aa).

May be involved in preference for HM-URA DNA stretches follow at residues P52–V77 and E90–K99. DNA-binding regions lie at residues F61 and K93–Y94.

It belongs to the bacterial histone-like protein family. In terms of assembly, homodimer.

In terms of biological role, selectively binds to and inhibits the transcription of hydroxymethyluracil-(hmUra)-containing DNA, such as SP01 DNA, by RNA polymerase in vitro. In Bacillus phage SP01 (Bacteriophage SP01), this protein is Transcription factor 1 (TF1).